The chain runs to 261 residues: Ice-binding protein (261 aa).

A signal peptide spans 1-20 (MSLLSIITIGLAGLGGLVNG). Asn185 carries an N-linked (GlcNAc...) asparagine glycan.

The protein belongs to the ice-binding protein family. As to quaternary structure, homodimer. Dimerization is not required for the thermal hysteresis (TH) activity. Post-translationally, glycosylated. Glycosylation is not required for the thermal hysteresis (TH) activity. Glycosylation may increase stability and secretion of this protein.

Its subcellular location is the secreted. Functionally, confers freeze tolerance. Binds to the surface of ice crystals and inhibits their growth. Has low thermal hysteresis (TH) activity, which is the ability to lower the freezing point of an aqueous solution below its melting point. The TH activity of this protein is approximately 0.2 degrees Celsius at 50 uM and 0.3 degrees Celsius at 400 uM. The polypeptide is Ice-binding protein (Leucosporidium sp. (strain AY30) (Arctic yeast)).